The sequence spans 147 residues: Hemoglobin subunit epsilon (147 aa).

The 145-residue stretch at 3 to 147 folds into the Globin domain; sequence HFTAEEKAAI…VAIALGHKYH (145 aa). A phosphoserine mark is found at Ser14 and Ser51. The heme b site is built by His64 and His93.

This sequence belongs to the globin family. Heterotetramer of two alpha chains and two epsilon chains in early embryonic hemoglobin Gower-2; two zeta chains and two epsilon chains in early embryonic hemoglobin Gower-1. As to expression, red blood cells.

Functionally, the epsilon chain is a beta-type chain of early mammalian embryonic hemoglobin. This chain is Hemoglobin subunit epsilon (HBE1), found in Saimiri boliviensis boliviensis (Bolivian squirrel monkey).